Consider the following 319-residue polypeptide: Triacylglycerol lipase (319 aa).

An AB hydrolase-1 domain is found at 10-288 (PVILVHGLAG…TSYHWNHLDE (279 aa)). Leucine 17 is a substrate binding site. Serine 87 (nucleophile) is an active-site residue. Glutamine 88 contributes to the substrate binding site. An intrachain disulfide couples cysteine 190 to cysteine 269. Aspartate 241 provides a ligand contact to Ca(2+). Residues aspartate 263 and histidine 285 each act as charge relay system in the active site. Ca(2+)-binding residues include aspartate 287, glutamine 291, and valine 295.

This sequence belongs to the AB hydrolase superfamily. Pseudomonas lipase family. As to quaternary structure, monomer. Interacts with lipase-specific foldase Lif. Ca(2+) is required as a cofactor.

Its subcellular location is the secreted. It carries out the reaction a triacylglycerol + H2O = a diacylglycerol + a fatty acid + H(+). In terms of biological role, catalyzes the hydrolysis of triacylglycerol. This Pseudarthrobacter phenanthrenivorans (Arthrobacter phenanthrenivorans) protein is Triacylglycerol lipase.